Reading from the N-terminus, the 252-residue chain is MAIHADTHDDLRLFQTGEHACGYWSDRQARDLVLDPHDPRLGALYPQALAWGFRRSGDLVYRPHCERCRACVPVRIAVDAFHPDRSQRRCLARNQDLVVRVVAAERTEEQLALYRQYLQHRHPGGGMDTHGAAEFDQFLIGGWSHGRFLEIREPAVDHVPGRLLAVAVTDVTEHALSAVYTFYAPDAAARSLGTFAILEQIQWARRERRAHLYLGYWIEGHAKMNYKRRFNALEAYDGRHWRGLPAAQGSAR.

Belongs to the R-transferase family. Bpt subfamily.

Its subcellular location is the cytoplasm. It catalyses the reaction N-terminal L-glutamyl-[protein] + L-leucyl-tRNA(Leu) = N-terminal L-leucyl-L-glutamyl-[protein] + tRNA(Leu) + H(+). The catalysed reaction is N-terminal L-aspartyl-[protein] + L-leucyl-tRNA(Leu) = N-terminal L-leucyl-L-aspartyl-[protein] + tRNA(Leu) + H(+). In terms of biological role, functions in the N-end rule pathway of protein degradation where it conjugates Leu from its aminoacyl-tRNA to the N-termini of proteins containing an N-terminal aspartate or glutamate. This is Aspartate/glutamate leucyltransferase from Xanthomonas campestris pv. campestris (strain B100).